Consider the following 1148-residue polypeptide: Alpha-mannosidase 2 (1148 aa).

Topologically, residues 1–5 (MKLSR) are cytoplasmic. Residues 6 to 26 (QFTVFGSAIFCVVIFSLYLML) traverse the membrane as a helical; Signal-anchor for type II membrane protein segment. The Lumenal segment spans residues 27–1148 (DRGHLDYPRG…EISTSRIRLR (1122 aa)). Ser-80 and Ser-82 each carry phosphoserine. Asn-93 is a glycosylation site (N-linked (GlcNAc...) asparagine). Zn(2+)-binding residues include His-174, Asp-176, Asp-288, and His-568. Asp-288 functions as the Nucleophile in the catalytic mechanism. Residues 1121-1148 (MHSPPDAQNTSEVSLSPMEISTSRIRLR) are disordered.

The protein belongs to the glycosyl hydrolase 38 family. As to quaternary structure, homodimer; disulfide-linked. Zn(2+) serves as cofactor. Glycosylated. Liver.

The protein resides in the golgi apparatus membrane. It carries out the reaction N(4)-{beta-D-GlcNAc-(1-&gt;2)-alpha-D-Man-(1-&gt;3)-[alpha-D-Man-(1-&gt;3)-[alpha-D-Man-(1-&gt;6)]-alpha-D-Man-(1-&gt;6)]-beta-D-Man-(1-&gt;4)-beta-D-GlcNAc-(1-&gt;4)-beta-D-GlcNAc}-L-asparaginyl-[protein] + 2 H2O = 2 alpha-D-mannopyranose + an N(4)-{beta-D-GlcNAc-(1-&gt;2)-alpha-D-Man-(1-&gt;3)-[alpha-D-Man-(1-&gt;6)]-beta-D-Man-(1-&gt;4)-beta-D-GlcNAc-(1-&gt;4)-beta-D-GlcNAc}-L-asparaginyl-[protein]. Its pathway is protein modification; protein glycosylation. Inhibited by swainsonine. Catalyzes the first committed step in the biosynthesis of complex N-glycans. It controls conversion of high mannose to complex N-glycans; the final hydrolytic step in the N-glycan maturation pathway. The polypeptide is Alpha-mannosidase 2 (Man2a1) (Rattus norvegicus (Rat)).